An 89-amino-acid polypeptide reads, in one-letter code: Small ribosomal subunit protein uS15 (89 aa).

It belongs to the universal ribosomal protein uS15 family. In terms of assembly, part of the 30S ribosomal subunit. Forms a bridge to the 50S subunit in the 70S ribosome, contacting the 23S rRNA.

Its function is as follows. One of the primary rRNA binding proteins, it binds directly to 16S rRNA where it helps nucleate assembly of the platform of the 30S subunit by binding and bridging several RNA helices of the 16S rRNA. Forms an intersubunit bridge (bridge B4) with the 23S rRNA of the 50S subunit in the ribosome. The protein is Small ribosomal subunit protein uS15 of Streptococcus agalactiae serotype Ia (strain ATCC 27591 / A909 / CDC SS700).